A 76-amino-acid chain; its full sequence is Sec-independent protein translocase protein TatA (76 aa).

Residues 1–21 (MGGLSIWHWLIVLLIVALVFG) form a helical membrane-spanning segment. The interval 43–76 (MKDGDAPADAQQLPRSGTVDVNAKEATRSDSNKA) is disordered. Basic and acidic residues predominate over residues 64–76 (NAKEATRSDSNKA).

It belongs to the TatA/E family. In terms of assembly, the Tat system comprises two distinct complexes: a TatABC complex, containing multiple copies of TatA, TatB and TatC subunits, and a separate TatA complex, containing only TatA subunits. Substrates initially bind to the TatABC complex, which probably triggers association of the separate TatA complex to form the active translocon.

The protein resides in the cell inner membrane. Its function is as follows. Part of the twin-arginine translocation (Tat) system that transports large folded proteins containing a characteristic twin-arginine motif in their signal peptide across membranes. TatA could form the protein-conducting channel of the Tat system. In Burkholderia multivorans (strain ATCC 17616 / 249), this protein is Sec-independent protein translocase protein TatA.